A 224-amino-acid chain; its full sequence is Ras-related protein Rab-32C (224 aa).

A disordered region spans residues 1-22; that stretch reads MYSNKNDKDKDKDQNNENNKNN. A GTP-binding site is contributed by 35–42; it reads GKLACGKT. The Effector region signature appears at 57-65; sequence YKPTIGVDF. GTP contacts are provided by residues 83–87 and 142–145; these read DIAGQ and NKCD. The tract at residues 203 to 224 is disordered; the sequence is GFKLSDQSQSTETTPTQSKTCC. Low complexity predominate over residues 209–224; the sequence is QSQSTETTPTQSKTCC. S-geranylgeranyl cysteine attachment occurs at residues cysteine 223 and cysteine 224.

Belongs to the small GTPase superfamily. Rab family.

The polypeptide is Ras-related protein Rab-32C (rab32C) (Dictyostelium discoideum (Social amoeba)).